A 231-amino-acid chain; its full sequence is L-ribulose-5-phosphate 4-epimerase SgbE (231 aa).

Residues 27–28 (GN), 44–45 (SG), and 74–75 (SS) contribute to the substrate site. Residues D76, H95, and H97 each contribute to the Zn(2+) site. Catalysis depends on D120, which acts as the Proton donor/acceptor. H171 provides a ligand contact to Zn(2+). The Proton donor/acceptor role is filled by Y229.

The protein belongs to the aldolase class II family. AraD/FucA subfamily. The cofactor is Zn(2+).

The enzyme catalyses L-ribulose 5-phosphate = D-xylulose 5-phosphate. In terms of biological role, catalyzes the interconversion of L-ribulose 5-phosphate (LRu5P) and D-xylulose 5-phosphate (D-Xu5P) via a retroaldol/aldol mechanism (carbon-carbon bond cleavage analogous to a class II aldolase reaction). May be involved in the utilization of 2,3-diketo-L-gulonate. This Escherichia coli (strain K12) protein is L-ribulose-5-phosphate 4-epimerase SgbE.